The following is a 333-amino-acid chain: UPF0284 protein VNG_1572C (333 aa).

Belongs to the UPF0284 family.

The polypeptide is UPF0284 protein VNG_1572C (Halobacterium salinarum (strain ATCC 700922 / JCM 11081 / NRC-1) (Halobacterium halobium)).